We begin with the raw amino-acid sequence, 330 residues long: Probable transposase for insertion sequence element ISH11 (330 aa).

This sequence belongs to the transposase 11 family.

In terms of biological role, involved in the transposition of the insertion sequence ISH11. This chain is Probable transposase for insertion sequence element ISH11, found in Halobacterium salinarum (strain ATCC 29341 / DSM 671 / R1).